The primary structure comprises 639 residues: Protein artemis (639 aa).

Disordered stretches follow at residues 450–496 (MDCT…LTSS), 515–570 (SELE…SQVD), and 590–617 (EAAE…VPQP). Residues 454 to 466 (ESNDDDDDEDDAA) are compositionally biased toward acidic residues. Positions 518–537 (ENSQNTQTLSTENTASQSPE) are enriched in polar residues. Residues 548 to 560 (VHMSSSQSTHISD) show a composition bias toward low complexity.

It belongs to the DNA repair metallo-beta-lactamase (DRMBL) family.

The protein localises to the nucleus. Its function is as follows. May have a role in the processing of DNA double strand breaks (DSBs) prior to their repair by the non homologous end joining (NHEJ) pathway. Probably exhibits both exonuclease and endonuclease activity. In Danio rerio (Zebrafish), this protein is Protein artemis (dclre1c).